Here is a 709-residue protein sequence, read N- to C-terminus: UV-stimulated scaffold protein A (709 aa).

Residues 1-10 show a composition bias toward basic and acidic residues; sequence MDQKLSKLVE. Residues 1–20 form a disordered region; the sequence is MDQKLSKLVEELTTSGEPRL. The interval 2–145 is VHS-like; the sequence is DQKLSKLVEE…HFLRHNKKVD (144 aa). A coiled-coil region spans residues 165–199; that stretch reads KHLDKIYQERASQAEREMQEMSGEIESCLTEVESC. Disordered regions lie at residues 230-289 and 386-406; these read SCAG…DSDL and EGGE…EDDE. Positions 280 to 289 are enriched in acidic residues; that stretch reads PSDEDEDSDL. 2 positions are modified to phosphoserine: Ser281 and Ser287. Over residues 386–395 the composition is skewed to basic and acidic residues; that stretch reads EGGERRRTEA. The segment covering 397–406 has biased composition (acidic residues); sequence GDAEEDEDDE. Lys414 is covalently cross-linked (Glycyl lysine isopeptide (Lys-Gly) (interchain with G-Cter in ubiquitin)). The disordered stretch occupies residues 469–495; the sequence is DHLPPPSSASPSRALPEPQEAQKLAAE. Over residues 477-486 the composition is skewed to low complexity; that stretch reads ASPSRALPEP. The UVSSA-type zinc-finger motif lies at 564–591; it reads QHWCRAPRPDGRLCERQDRLKCPFHGKI. 4 residues coordinate Zn(2+): Cys567, Cys577, Cys585, and His588. The segment at 588 to 655 is disordered; it reads HGKIVPRDDE…GKGRGKKRRY (68 aa). The segment covering 592–632 has biased composition (basic and acidic residues); sequence VPRDDEGRPLDPEDRAREQRRQLQKQERPEWQDPELMRDVE. Basic residues predominate over residues 646–655; sequence GKGRGKKRRY.

This sequence belongs to the UVSSA family. As to quaternary structure, interacts with the elongating form of RNA polymerase II (RNA pol IIo) during transcription stress. Interacts with the TFIIH complex during transcription stress. Interacts with ERCC6. Interacts with ERCC8. Interacts with USP7. Monoubiquitinated at Lys-414 in response to transcription stress; this promotes efficient transfer of TFIIH to stalled RNA polymerase II.

The protein localises to the chromosome. Factor involved in transcription-coupled nucleotide excision repair (TC-NER), a mechanism that rapidly removes RNA polymerase II-blocking lesions from the transcribed strand of active genes. Acts as a key adapter that promotes recruitment of factors involved in TC-NER. Facilitates the ubiquitination of the elongating form of RNA polymerase II (RNA pol IIo) at DNA damage sites, thereby promoting RNA pol IIo backtracking and access by the TC-NER machinery to lesion sites. Also promotes stabilization of ERCC6/CSB by recruiting deubiquitinating enzyme USP7 to TC-NER complexes, preventing UV-induced degradation of ERCC6 by the proteasome. Mediates the recruitment of the TFIIH complex and other factors that are required for nucleotide excision repair to RNA polymerase II. Also required to inactivate stalled RNA polymerase II by blocking the access of TCEA1/TFIIS, thereby preventing reactivation of RNA polymerase II. Not involved in processing oxidative damage. The sequence is that of UV-stimulated scaffold protein A from Homo sapiens (Human).